Consider the following 876-residue polypeptide: MDPAPSLGCSLKDVKWSPVAMPLDLLVSTYRLPQIARLDSGECVEGLRENDFLLIHSCRQWTTITAHSLEEGHYVIGPKIEIPVHYAGQFKLLEQDRDIKEPVQYFNSVEEVAKAFPERVYVMEEITFNVKVASGECNEDTEVYNITLCTGDELTLMGQAEILYAKTFKEKSRLNTIFKKIGKLNSISKLGKGKMPCLICMNHRTNESISLPFQCKGRFSTRSPLELQMQEGEHTIRNIVEKTRLPVNVTVPSPPPRNPYDLHFIREGHRYKFVNIQTKTVVVCCVLRNNKILPMHFPLHLTVPKFSLPEHQVKGDMWPETLVHHWLGICQEQFDIDEYSRAVRDVKTDWNEDCKSPKKGRCSGHNHLPNSLSYARDELTQSFHRLSVCVYGNNLHGNSEVNLHGCRDLGGEWAPFPHDILPYQDSGDSGSDYLFPEANEESAGIPGKTEVPYEELWLEEGKPSRQPLTRSLSEKSRCDTLRGSTRSTCAPSSPPTPATLGATIKSSEIALPPPPVPPKSEAVREECRLLNAPPVPPRSAKPLSTSPSIPPRTVKPVRPQTRSPSPTLSYYSSGLHNIITQSDTSPPNSAPVSCYPCTRVKSDSVDPKSPFGSPSAEALSSRLSWPNHYSGASENQTRSDFLLDPSRSYSYPRQKTPGTPKRTCPAPFDFEGCELLGSPPSTTSAEFSSSGVPSCPKSASYCLENSEDNSFAAGMTKQSVSCPALPPRAPKPVEQKATPETSPLPLKIDGAEEDPTAGSLDLSEDQYFVRKGMQDIFSVSYPFSSPLHLQLAPRSCGDGSPWQPPADLSGLSIEEVSKSLRFIGLSEDVIAFFVTEKIDGNLLVQLTEEILSEDFKLSKLQVKKILQFINGWRPKI.

The interval 12–320 is CABIT; the sequence is KDVKWSPVAM…HQVKGDMWPE (309 aa). Position 105 is a phosphotyrosine (tyrosine 105). Positions 427–448 are disordered; sequence GDSGSDYLFPEANEESAGIPGK. Tyrosine 453 is modified (phosphotyrosine). 2 disordered regions span residues 460 to 501 and 530 to 572; these read EGKP…ATLG and LNAP…SYYS. Positions 498–550 are necessary for interaction with GRB2; sequence ATLGATIKSSEIALPPPPVPPKSEAVREECRLLNAPPVPPRSAKPLSTSPSIP. Polar residues predominate over residues 560–572; sequence QTRSPSPTLSYYS. A phosphoserine mark is found at serine 609 and serine 613. Polar residues-rich tracts occupy residues 630-639 and 647-657; these read SGASENQTRS and RSYSYPRQKTP. Disordered regions lie at residues 630-664 and 722-759; these read SGAS…KRTC and CPAL…TAGS. The region spanning 811-876 is the SAM domain; the sequence is LSIEEVSKSL…QFINGWRPKI (66 aa).

It belongs to the GAREM family. Interacts with EGFR. Interacts (via proline-rich domain and phosphorylated at Tyr-105 and Tyr-453) with GRB2 (via SH3 domains); the interaction occurs upon EGF stimulation. Interacts (phosphorylated at Tyr-453) with PTPN11; the interaction increases MAPK/ERK activity and does not affect the GRB2/SOS complex formation. In terms of processing, on EGF stimulation, phosphorylated on Tyr-105 and Tyr-453.

Acts as an adapter protein that plays a role in intracellular signaling cascades triggered either by the cell surface activated epidermal growth factor receptor and/or cytoplasmic protein tyrosine kinases. Promotes activation of the MAPK/ERK signaling pathway. Plays a role in the regulation of cell proliferation. The protein is GRB2-associated and regulator of MAPK protein (Garem1) of Mus musculus (Mouse).